Here is a 253-residue protein sequence, read N- to C-terminus: Tetraspanin-3 (253 aa).

Residues 1 to 11 (MGQCGITSSKT) lie on the Cytoplasmic side of the membrane. Residues 12 to 32 (VLVFLNLIFWGAAGILCYVGA) traverse the membrane as a helical segment. At 33–50 (YVFITYDDYDHFFEDVYT) the chain is on the extracellular side. The chain crosses the membrane as a helical span at residues 51–71 (LFPAVVIIAVGALLFIIGLIG). The Cytoplasmic portion of the chain corresponds to 72 to 85 (CCATIRESRCGLAT). A helical membrane pass occupies residues 86–106 (FVFILLLVFVTEVVVVVLGYV). Topologically, residues 107–212 (YRAKVENEVD…KKLQEILMHV (106 aa)) are extracellular. N-linked (GlcNAc...) asparagine glycans are attached at residues asparagine 127, asparagine 152, asparagine 167, and asparagine 183. A helical transmembrane segment spans residues 213-233 (IWAALAFAAIQLLGMLCACIV). At 234 to 253 (LCRRSRDPAYELLITGGTYA) the chain is on the cytoplasmic side.

The protein belongs to the tetraspanin (TM4SF) family. As to quaternary structure, interacts with claudin-11/CLDN11 and integrins.

It localises to the membrane. Its function is as follows. Regulates the proliferation and migration of oligodendrocytes, a process essential for normal myelination and repair. The polypeptide is Tetraspanin-3 (Tspan3) (Mus musculus (Mouse)).